A 569-amino-acid polypeptide reads, in one-letter code: Formate--tetrahydrofolate ligase (569 aa).

Residue 64–71 coordinates ATP; the sequence is TPHGEGKT.

Belongs to the formate--tetrahydrofolate ligase family.

The catalysed reaction is (6S)-5,6,7,8-tetrahydrofolate + formate + ATP = (6R)-10-formyltetrahydrofolate + ADP + phosphate. It functions in the pathway one-carbon metabolism; tetrahydrofolate interconversion. In Shewanella sp. (strain MR-7), this protein is Formate--tetrahydrofolate ligase.